The chain runs to 417 residues: Serine hydroxymethyltransferase (417 aa).

Residues L117 and 121-123 contribute to the (6S)-5,6,7,8-tetrahydrofolate site; that span reads GHL. K226 carries the post-translational modification N6-(pyridoxal phosphate)lysine.

It belongs to the SHMT family. Homodimer. Pyridoxal 5'-phosphate is required as a cofactor.

The protein localises to the cytoplasm. It catalyses the reaction (6R)-5,10-methylene-5,6,7,8-tetrahydrofolate + glycine + H2O = (6S)-5,6,7,8-tetrahydrofolate + L-serine. The protein operates within one-carbon metabolism; tetrahydrofolate interconversion. Its pathway is amino-acid biosynthesis; glycine biosynthesis; glycine from L-serine: step 1/1. Functionally, catalyzes the reversible interconversion of serine and glycine with tetrahydrofolate (THF) serving as the one-carbon carrier. This reaction serves as the major source of one-carbon groups required for the biosynthesis of purines, thymidylate, methionine, and other important biomolecules. Also exhibits THF-independent aldolase activity toward beta-hydroxyamino acids, producing glycine and aldehydes, via a retro-aldol mechanism. The sequence is that of Serine hydroxymethyltransferase from Shouchella clausii (strain KSM-K16) (Alkalihalobacillus clausii).